Here is a 390-residue protein sequence, read N- to C-terminus: Ribosomal RNA small subunit methyltransferase H (390 aa).

S-adenosyl-L-methionine-binding positions include Gly-47 to His-49, Asp-66, Phe-93, Asp-122, and Gln-129. The tract at residues Ser-282–Gln-390 is disordered. Positions Gly-305–Lys-316 are enriched in basic and acidic residues. Residues Ser-348–Ser-358 show a composition bias toward polar residues. 2 stretches are compositionally biased toward basic and acidic residues: residues Ser-360–Leu-372 and Ser-381–Gln-390.

It belongs to the methyltransferase superfamily. RsmH family.

It is found in the cytoplasm. It catalyses the reaction cytidine(1402) in 16S rRNA + S-adenosyl-L-methionine = N(4)-methylcytidine(1402) in 16S rRNA + S-adenosyl-L-homocysteine + H(+). In terms of biological role, specifically methylates the N4 position of cytidine in position 1402 (C1402) of 16S rRNA. The protein is Ribosomal RNA small subunit methyltransferase H of Corynebacterium kroppenstedtii (strain DSM 44385 / JCM 11950 / CIP 105744 / CCUG 35717).